Reading from the N-terminus, the 284-residue chain is MDLSRINTWKSKQLKSFLSSKDAFKADINGHSVLYYAIADNNVRLVCTLLNAGALKNLLDNEFPLHQAATLEDTKIVKILLFSGMDDSQFDDKGNTALYYAVDSGNMQTVKLFVKKNWRLMFYGKTGWKTSFYHAVMLNDVSIVSYFLSEIPSPFDLAILLSCIHTTIKNGHVDMMILLLDYMTSTNTNSLLFIPDIKLAIDNKDIEMLQALFKYDINIYSVNLENVLLDDAEIAKMIIEKHVEYKSDSYTKDLDDVKNNKLDEIISKNEELRLMYVNCVRKNY.

ANK repeat units follow at residues 29-58 (NGHS…LKNL), 60-89 (DNEF…DDSQ), 93-122 (KGNT…RLMF), 127-157 (GWKT…PFDL), 159-188 (ILLS…STNT), and 192-221 (LFIP…NIYS).

This sequence belongs to the orthopoxvirus OPG039 family.

It is found in the host cytoplasm. The protein localises to the host nucleus. Its function is as follows. Inhibits antiviral activity induced by type I interferons. Does not block signal transduction of IFN, but is important to counter the host antiviral state induced by a pre-treatment with IFN. Plays a role in the inhibition of host NF-kappa-B activation by preventing the acetylation of the RELA/p65 subunit of NF-kappaB. The protein is Interferon antagonist OPG039 (OPG039) of Cynomys gunnisoni (Gunnison's prairie dog).